The sequence spans 320 residues: o-succinylbenzoate synthase (320 aa).

Lys133 (proton donor) is an active-site residue. Positions 161, 190, and 213 each coordinate Mg(2+). The Proton acceptor role is filled by Lys235.

The protein belongs to the mandelate racemase/muconate lactonizing enzyme family. MenC type 1 subfamily. It depends on a divalent metal cation as a cofactor.

It catalyses the reaction (1R,6R)-6-hydroxy-2-succinyl-cyclohexa-2,4-diene-1-carboxylate = 2-succinylbenzoate + H2O. It participates in quinol/quinone metabolism; 1,4-dihydroxy-2-naphthoate biosynthesis; 1,4-dihydroxy-2-naphthoate from chorismate: step 4/7. The protein operates within quinol/quinone metabolism; menaquinone biosynthesis. Functionally, converts 2-succinyl-6-hydroxy-2,4-cyclohexadiene-1-carboxylate (SHCHC) to 2-succinylbenzoate (OSB). The polypeptide is o-succinylbenzoate synthase (Escherichia coli (strain K12 / MC4100 / BW2952)).